Reading from the N-terminus, the 420-residue chain is Glutamyl-tRNA reductase (420 aa).

Residues 49 to 52 (TCNR), S109, 114 to 116 (EPQ), and Q120 contribute to the substrate site. Residue C50 is the Nucleophile of the active site. 189-194 (GAGETI) serves as a coordination point for NADP(+).

Belongs to the glutamyl-tRNA reductase family. As to quaternary structure, homodimer.

The catalysed reaction is (S)-4-amino-5-oxopentanoate + tRNA(Glu) + NADP(+) = L-glutamyl-tRNA(Glu) + NADPH + H(+). It participates in porphyrin-containing compound metabolism; protoporphyrin-IX biosynthesis; 5-aminolevulinate from L-glutamyl-tRNA(Glu): step 1/2. Functionally, catalyzes the NADPH-dependent reduction of glutamyl-tRNA(Glu) to glutamate 1-semialdehyde (GSA). The protein is Glutamyl-tRNA reductase of Photorhabdus laumondii subsp. laumondii (strain DSM 15139 / CIP 105565 / TT01) (Photorhabdus luminescens subsp. laumondii).